We begin with the raw amino-acid sequence, 383 residues long: Lipid-A-disaccharide synthase (383 aa).

Belongs to the LpxB family.

It carries out the reaction a lipid X + a UDP-2-N,3-O-bis[(3R)-3-hydroxyacyl]-alpha-D-glucosamine = a lipid A disaccharide + UDP + H(+). It functions in the pathway bacterial outer membrane biogenesis; LPS lipid A biosynthesis. Its function is as follows. Condensation of UDP-2,3-diacylglucosamine and 2,3-diacylglucosamine-1-phosphate to form lipid A disaccharide, a precursor of lipid A, a phosphorylated glycolipid that anchors the lipopolysaccharide to the outer membrane of the cell. This is Lipid-A-disaccharide synthase from Anaeromyxobacter dehalogenans (strain 2CP-C).